Consider the following 121-residue polypeptide: Small ribosomal subunit protein uS11 (121 aa).

This sequence belongs to the universal ribosomal protein uS11 family. In terms of assembly, part of the 30S ribosomal subunit. Interacts with proteins S7 and S18. Binds to IF-3.

In terms of biological role, located on the platform of the 30S subunit, it bridges several disparate RNA helices of the 16S rRNA. Forms part of the Shine-Dalgarno cleft in the 70S ribosome. This Mycoplasma pneumoniae (strain ATCC 29342 / M129 / Subtype 1) (Mycoplasmoides pneumoniae) protein is Small ribosomal subunit protein uS11.